Reading from the N-terminus, the 498-residue chain is L-proline--[L-prolyl-carrier protein] ligase (498 aa).

The protein belongs to the ATP-dependent AMP-binding enzyme family.

The enzyme catalyses holo-[peptidyl-carrier protein] + L-proline + ATP = L-prolyl-[peptidyl-carrier protein] + AMP + diphosphate. Involved in the biosynthesis of pyoluteorin. Catalyzes the conversion of L-proline to L-prolyl-AMP and the transfer of the L-prolyl group to acyl carrier protein PltL. The sequence is that of L-proline--[L-prolyl-carrier protein] ligase from Pseudomonas fluorescens (strain ATCC BAA-477 / NRRL B-23932 / Pf-5).